The sequence spans 197 residues: Probable GTP-binding protein EngB (197 aa).

The EngB-type G domain maps to 26–197; that stretch reads DLPEIALAGR…TSWDAILESL (172 aa). GTP-binding positions include 34–41, 61–65, 79–82, 146–149, and 178–180; these read GRSNVGKS, GKTQS, DVPG, TKAD, and FSS. The Mg(2+) site is built by Ser-41 and Thr-63.

The protein belongs to the TRAFAC class TrmE-Era-EngA-EngB-Septin-like GTPase superfamily. EngB GTPase family. Mg(2+) is required as a cofactor.

Necessary for normal cell division and for the maintenance of normal septation. The chain is Probable GTP-binding protein EngB from Streptococcus mutans serotype c (strain ATCC 700610 / UA159).